A 451-amino-acid chain; its full sequence is Glutamyl-tRNA reductase (451 aa).

Substrate contacts are provided by residues 47–50 (TCNR), serine 132, 137–139 (EPQ), and glutamine 143. The Nucleophile role is filled by cysteine 48. An NADP(+)-binding site is contributed by 212–217 (AAGEMN).

The protein belongs to the glutamyl-tRNA reductase family. As to quaternary structure, homodimer.

The catalysed reaction is (S)-4-amino-5-oxopentanoate + tRNA(Glu) + NADP(+) = L-glutamyl-tRNA(Glu) + NADPH + H(+). Its pathway is porphyrin-containing compound metabolism; protoporphyrin-IX biosynthesis; 5-aminolevulinate from L-glutamyl-tRNA(Glu): step 1/2. Catalyzes the NADPH-dependent reduction of glutamyl-tRNA(Glu) to glutamate 1-semialdehyde (GSA). The sequence is that of Glutamyl-tRNA reductase from Psychrobacter sp. (strain PRwf-1).